We begin with the raw amino-acid sequence, 572 residues long: Urease subunit alpha (572 aa).

One can recognise a Urease domain in the interval 134 to 572 (AGIDSHIHLI…ASMNQRYFFG (439 aa)). Ni(2+) is bound by residues H139, H141, and K222. K222 carries the N6-carboxylysine modification. A substrate-binding site is contributed by H224. The Ni(2+) site is built by H251 and H277. Residue H325 is the Proton donor of the active site. D365 provides a ligand contact to Ni(2+).

The protein belongs to the metallo-dependent hydrolases superfamily. Urease alpha subunit family. As to quaternary structure, heterotrimer of UreA (gamma), UreB (beta) and UreC (alpha) subunits. Three heterotrimers associate to form the active enzyme. Ni cation serves as cofactor. Carboxylation allows a single lysine to coordinate two nickel ions.

Its subcellular location is the cytoplasm. It catalyses the reaction urea + 2 H2O + H(+) = hydrogencarbonate + 2 NH4(+). It participates in nitrogen metabolism; urea degradation; CO(2) and NH(3) from urea (urease route): step 1/1. The protein is Urease subunit alpha of Yersinia pseudotuberculosis serotype O:1b (strain IP 31758).